Here is a 328-residue protein sequence, read N- to C-terminus: Tetraacyldisaccharide 4'-kinase (328 aa).

52–59 (NAGGTGKT) serves as a coordination point for ATP.

It belongs to the LpxK family.

The enzyme catalyses a lipid A disaccharide + ATP = a lipid IVA + ADP + H(+). Its pathway is glycolipid biosynthesis; lipid IV(A) biosynthesis; lipid IV(A) from (3R)-3-hydroxytetradecanoyl-[acyl-carrier-protein] and UDP-N-acetyl-alpha-D-glucosamine: step 6/6. Functionally, transfers the gamma-phosphate of ATP to the 4'-position of a tetraacyldisaccharide 1-phosphate intermediate (termed DS-1-P) to form tetraacyldisaccharide 1,4'-bis-phosphate (lipid IVA). In Jannaschia sp. (strain CCS1), this protein is Tetraacyldisaccharide 4'-kinase.